A 300-amino-acid polypeptide reads, in one-letter code: Inosose dehydratase (300 aa).

Belongs to the IolE/MocC family. Glutathione is required as a cofactor. Requires Co(2+) as cofactor. Mn(2+) serves as cofactor.

It catalyses the reaction scyllo-inosose = 3D-3,5/4-trihydroxycyclohexane-1,2-dione + H2O. In terms of biological role, catalyzes the dehydration of inosose (2-keto-myo-inositol, 2KMI or 2,4,6/3,5-pentahydroxycyclohexanone) to 3D-(3,5/4)-trihydroxycyclohexane-1,2-dione (D-2,3-diketo-4-deoxy-epi-inositol). This Mesomycoplasma hyopneumoniae (strain 232) (Mycoplasma hyopneumoniae) protein is Inosose dehydratase.